We begin with the raw amino-acid sequence, 337 residues long: MNKLLLLILFECIIFLSCSGKGSLESGIPKVSVIVNGTFDDKSFNESALNGIKKVKEEFKIELVLKESSTNSYLSDLEGLKDAGSNLIWLIGYRFSDVAKAVSLQNPEIKYAIIDPVYSEEPIPTNLVGMTFRAQEGAFLTGYIAAKVSKTGKIGFLGGIEGEIVDAFRYGYEAGAKYANKDIKISAHYIGSFNDVEAGRSVATKMYSDGIDIIHHAASLGGIGAIEVAKELGSGHYIIGVDEDQSYLAPNNIITSATKDVGRSLNIFTSNYLKTNTFEGGRLINYGLKEGVVGFVKNPKMIPFELEKEIDNLSSKIINQEIIVPYNKESYEKFLKE.

A signal peptide spans 1–17 (MNKLLLLILFECIIFLS). The N-palmitoyl cysteine moiety is linked to residue cysteine 18. Cysteine 18 is lipidated: S-diacylglycerol cysteine.

It belongs to the BMP lipoprotein family. Monomer.

Its subcellular location is the cell inner membrane. Immunogenic protein. May be part of an ABC-type nucleoside uptake system involved in the purine salvage pathway. The polypeptide is Basic membrane protein A2 (bmpA2) (Borrelia garinii subsp. bavariensis (strain ATCC BAA-2496 / DSM 23469 / PBi) (Borreliella bavariensis)).